The chain runs to 178 residues: ATP synthase subunit delta (178 aa).

This sequence belongs to the ATPase delta chain family. In terms of assembly, F-type ATPases have 2 components, F(1) - the catalytic core - and F(0) - the membrane proton channel. F(1) has five subunits: alpha(3), beta(3), gamma(1), delta(1), epsilon(1). F(0) has three main subunits: a(1), b(2) and c(10-14). The alpha and beta chains form an alternating ring which encloses part of the gamma chain. F(1) is attached to F(0) by a central stalk formed by the gamma and epsilon chains, while a peripheral stalk is formed by the delta and b chains.

The protein resides in the cell membrane. F(1)F(0) ATP synthase produces ATP from ADP in the presence of a proton or sodium gradient. F-type ATPases consist of two structural domains, F(1) containing the extramembraneous catalytic core and F(0) containing the membrane proton channel, linked together by a central stalk and a peripheral stalk. During catalysis, ATP synthesis in the catalytic domain of F(1) is coupled via a rotary mechanism of the central stalk subunits to proton translocation. Functionally, this protein is part of the stalk that links CF(0) to CF(1). It either transmits conformational changes from CF(0) to CF(1) or is implicated in proton conduction. The protein is ATP synthase subunit delta of Streptococcus mutans serotype c (strain ATCC 700610 / UA159).